Reading from the N-terminus, the 103-residue chain is Movement protein TGB2 (103 aa).

The Cytoplasmic segment spans residues 1–8; it reads MSFAPPPD. The chain crosses the membrane as a helical span at residues 9 to 29; the sequence is YSKIYLALGCGLGLGFVVYAS. The Lumenal segment spans residues 30-70; the sequence is RVNHLPHVGDNTHNLPHGGQYCDGNKRVLYSGPKSGSSPTN. The chain crosses the membrane as a helical span at residues 71-91; sequence NLWPFITVIALTLAILLTSCP. The Cytoplasmic portion of the chain corresponds to 92–103; it reads RRRVCIRCSQHH.

This sequence belongs to the Tymovirales TGBp2 protein family.

The protein resides in the host endoplasmic reticulum membrane. Its function is as follows. Plays a role in viral cell-to-cell propagation, by facilitating genome transport to neighboring plant cells through plasmosdesmata,. In Allium cepa var. aggregatum (Shallot), this protein is Movement protein TGB2.